We begin with the raw amino-acid sequence, 131 residues long: Ribosome-binding factor A (131 aa).

Residues 110–131 (QMNLGEDNEDNEDKENNDPGEE) form a disordered region. Residues 115-131 (EDNEDNEDKENNDPGEE) are compositionally biased toward acidic residues.

Belongs to the RbfA family. In terms of assembly, monomer. Binds 30S ribosomal subunits, but not 50S ribosomal subunits or 70S ribosomes.

The protein localises to the cytoplasm. Functionally, one of several proteins that assist in the late maturation steps of the functional core of the 30S ribosomal subunit. Associates with free 30S ribosomal subunits (but not with 30S subunits that are part of 70S ribosomes or polysomes). Required for efficient processing of 16S rRNA. May interact with the 5'-terminal helix region of 16S rRNA. The protein is Ribosome-binding factor A of Natranaerobius thermophilus (strain ATCC BAA-1301 / DSM 18059 / JW/NM-WN-LF).